A 424-amino-acid polypeptide reads, in one-letter code: MVFIDTARIYIKAGDGGNGFISFRREKYVPYGGPDGGDGGKGGDVIFIADPNLSTLLDFKYKRKYIAENGENGKSKNQYGKDGEDLYIKVPVGTTIINDETGEVIADLIKPYQKAIVLKGGKGGRGNAKFATPTLKTPRFAESGEKGREMWVRLELKLLADVGLVGFPNAGKSTLLASCSRARPKIANYPFTTLTPNLGVVEHKGKSFVMADIPGLIEGAHRGEGLGHDFLRHIERTKMLIHVVDVSGSEGRDPVEDFEKINEELRLYDERLVTLPQIVAANKMDLPEGKEKYPRFEEEIKKRGYEVYPISALTKEGLDALLDKTIEILSSIPAEKIEEVPEVIVYNPPEEEETLEVEVKGNTYYLKGSKIDKLLKRINLQDEHSLRYFEILLRKSGVIDALKEKGFKSGDVINVRDFEFEYYE.

The region spanning 1-159 is the Obg domain; that stretch reads MVFIDTARIY…MWVRLELKLL (159 aa). Residues 160–330 form the OBG-type G domain; it reads ADVGLVGFPN…LLDKTIEILS (171 aa). GTP contacts are provided by residues 166–173, 191–195, 212–215, 282–285, and 311–313; these read GFPNAGKS, FTTLT, DIPG, NKMD, and SAL. Mg(2+)-binding residues include S173 and T193. Residues 347–424 form the OCT domain; that stretch reads NPPEEEETLE…VRDFEFEYYE (78 aa).

Belongs to the TRAFAC class OBG-HflX-like GTPase superfamily. OBG GTPase family. Monomer. The cofactor is Mg(2+).

It is found in the cytoplasm. Functionally, an essential GTPase which binds GTP, GDP and possibly (p)ppGpp with moderate affinity, with high nucleotide exchange rates and a fairly low GTP hydrolysis rate. Plays a role in control of the cell cycle, stress response, ribosome biogenesis and in those bacteria that undergo differentiation, in morphogenesis control. In Caldanaerobacter subterraneus subsp. tengcongensis (strain DSM 15242 / JCM 11007 / NBRC 100824 / MB4) (Thermoanaerobacter tengcongensis), this protein is GTPase Obg.